We begin with the raw amino-acid sequence, 319 residues long: Ribonucleoside-diphosphate reductase small chain (319 aa).

Fe cation-binding residues include Asp70, Glu101, and His104. Tyr108 is an active-site residue. Residues Glu163, Glu197, and His200 each contribute to the Fe cation site. Residues 313 to 319 are interaction with R1; the sequence is FSLDVDF.

The protein belongs to the ribonucleoside diphosphate reductase small chain family. As to quaternary structure, interacts with RNR1/OPG080 subunit. Can interact with host RNR1 supunit. It depends on Fe cation as a cofactor.

It carries out the reaction a 2'-deoxyribonucleoside 5'-diphosphate + [thioredoxin]-disulfide + H2O = a ribonucleoside 5'-diphosphate + [thioredoxin]-dithiol. In terms of biological role, ribonucleoside-diphosphate reductase holoenzyme provides the precursors necessary for viral DNA synthesis. Allows virus growth in non-dividing cells. Catalyzes the biosynthesis of deoxyribonucleotides from the corresponding ribonucleotides. The chain is Ribonucleoside-diphosphate reductase small chain (OPG048) from Vaccinia virus (strain L-IVP) (VACV).